Reading from the N-terminus, the 219-residue chain is Large ribosomal subunit protein bL25 (219 aa).

A disordered region spans residues 195–219; sequence EETTTTETSNEPEVIKKGKKEEEEK. Residues 197 to 206 show a composition bias toward low complexity; sequence TTTTETSNEP. Over residues 207–219 the composition is skewed to basic and acidic residues; it reads EVIKKGKKEEEEK.

The protein belongs to the bacterial ribosomal protein bL25 family. CTC subfamily. As to quaternary structure, part of the 50S ribosomal subunit; part of the 5S rRNA/L5/L18/L25 subcomplex. Contacts the 5S rRNA. Binds to the 5S rRNA independently of L5 and L18.

In terms of biological role, this is one of the proteins that binds to the 5S RNA in the ribosome where it forms part of the central protuberance. The chain is Large ribosomal subunit protein bL25 from Fervidobacterium nodosum (strain ATCC 35602 / DSM 5306 / Rt17-B1).